The sequence spans 747 residues: Cyclic di-GMP phosphodiesterase PdeF (747 aa).

Residues M1–W14 lie on the Periplasmic side of the membrane. A helical transmembrane segment spans residues W15–A36. Over H37–E42 the chain is Cytoplasmic. A helical membrane pass occupies residues V43 to L65. Topologically, residues P66–E79 are periplasmic. The chain crosses the membrane as a helical span at residues L80–G102. Residues Y103–Q128 are Cytoplasmic-facing. A helical transmembrane segment spans residues I129 to S151. The Periplasmic portion of the chain corresponds to R152–T165. A helical membrane pass occupies residues L166–R188. Residues V189–E215 lie on the Cytoplasmic side of the membrane. A helical transmembrane segment spans residues F216–N235. Topologically, residues E236–T239 are periplasmic. The helical transmembrane segment at I240 to M259 threads the bilayer. The Cytoplasmic segment spans residues R260–L265. A helical transmembrane segment spans residues I266–I285. Over P286–Q294 the chain is Periplasmic. A helical transmembrane segment spans residues L295–T317. Over R318–A747 the chain is Cytoplasmic. The 252-residue stretch at K493–R744 folds into the EAL domain.

Mg(2+) is required as a cofactor. It depends on Mn(2+) as a cofactor.

It is found in the cell inner membrane. The catalysed reaction is 3',3'-c-di-GMP + H2O = 5'-phosphoguanylyl(3'-&gt;5')guanosine + H(+). Its activity is regulated as follows. Inhibited by pGpG. Phosphodiesterase (PDE) that catalyzes the hydrolysis of cyclic-di-GMP (c-di-GMP) to 5'-pGpG. Truncated proteins consisting of the GGDEF/EAL domains (residues 319-747) or of the EAL domain alone (481-747) have c-di-GMP phosphodiesterase activity. They do not have diguanylate cyclase activity. Cyclic-di-GMP is a second messenger which controls cell surface-associated traits in bacteria. This is Cyclic di-GMP phosphodiesterase PdeF from Escherichia coli (strain K12).